We begin with the raw amino-acid sequence, 99 residues long: U1-theraphotoxin-Lsp1c (99 aa).

The signal sequence occupies residues Met-1–Ala-23. A propeptide spanning residues Ala-24 to Arg-50 is cleaved from the precursor. Cystine bridges form between Cys-54/Cys-67, Cys-58/Cys-91, Cys-72/Cys-74, and Cys-85/Cys-96.

Belongs to the neurotoxin 12 (Hwtx-2) family. 04 (lasiotoxin) subfamily. Expressed by the venom gland.

It is found in the secreted. Toxin that causes irreversible contractile paralysis into adult Aedes aegypti resulting in 100% mortality after 24 hours. This is U1-theraphotoxin-Lsp1c from Lasiodora sp. (strain IBSP 8539) (Brazilian salmon pink birdeater).